A 60-amino-acid chain; its full sequence is Small, acid-soluble spore protein 1 (60 aa).

The protein belongs to the alpha/beta-type SASP family. In terms of processing, SASP are degraded in the first minutes of spore germination and provide amino acids for both new protein synthesis and metabolism.

Functionally, SASP are bound to spore DNA. They are double-stranded DNA-binding proteins that cause DNA to change to an a-like conformation. They protect the DNA backbone from chemical and enzymatic cleavage and are thus involved in dormant spore's high resistance to UV light. The chain is Small, acid-soluble spore protein 1 (ssp1) from Clostridium perfringens (strain 13 / Type A).